A 200-amino-acid chain; its full sequence is Probable molybdenum cofactor guanylyltransferase (200 aa).

GTP contacts are provided by residues 9-11 (LAG), Lys21, Asp69, and Asp100. Asp100 provides a ligand contact to Mg(2+).

The protein belongs to the MobA family. The cofactor is Mg(2+).

It localises to the cytoplasm. It catalyses the reaction Mo-molybdopterin + GTP + H(+) = Mo-molybdopterin guanine dinucleotide + diphosphate. Transfers a GMP moiety from GTP to Mo-molybdopterin (Mo-MPT) cofactor (Moco or molybdenum cofactor) to form Mo-molybdopterin guanine dinucleotide (Mo-MGD) cofactor. This is Probable molybdenum cofactor guanylyltransferase from Bacillus cereus (strain G9842).